The primary structure comprises 176 residues: ATP synthase subunit delta (176 aa).

Belongs to the ATPase delta chain family. F-type ATPases have 2 components, F(1) - the catalytic core - and F(0) - the membrane proton channel. F(1) has five subunits: alpha(3), beta(3), gamma(1), delta(1), epsilon(1). F(0) has three main subunits: a(1), b(2) and c(10-14). The alpha and beta chains form an alternating ring which encloses part of the gamma chain. F(1) is attached to F(0) by a central stalk formed by the gamma and epsilon chains, while a peripheral stalk is formed by the delta and b chains.

The protein resides in the cell inner membrane. Functionally, f(1)F(0) ATP synthase produces ATP from ADP in the presence of a proton or sodium gradient. F-type ATPases consist of two structural domains, F(1) containing the extramembraneous catalytic core and F(0) containing the membrane proton channel, linked together by a central stalk and a peripheral stalk. During catalysis, ATP synthesis in the catalytic domain of F(1) is coupled via a rotary mechanism of the central stalk subunits to proton translocation. This protein is part of the stalk that links CF(0) to CF(1). It either transmits conformational changes from CF(0) to CF(1) or is implicated in proton conduction. The protein is ATP synthase subunit delta of Campylobacter curvus (strain 525.92).